A 325-amino-acid chain; its full sequence is Beta-ketoacyl-[acyl-carrier-protein] synthase III (325 aa).

Residues cysteine 119 and histidine 252 contribute to the active site. The tract at residues 253–257 (QANIR) is ACP-binding. The active site involves asparagine 282.

This sequence belongs to the thiolase-like superfamily. FabH family. Homodimer.

It localises to the cytoplasm. It carries out the reaction malonyl-[ACP] + acetyl-CoA + H(+) = 3-oxobutanoyl-[ACP] + CO2 + CoA. Its pathway is lipid metabolism; fatty acid biosynthesis. Functionally, catalyzes the condensation reaction of fatty acid synthesis by the addition to an acyl acceptor of two carbons from malonyl-ACP. Catalyzes the first condensation reaction which initiates fatty acid synthesis and may therefore play a role in governing the total rate of fatty acid production. Possesses both acetoacetyl-ACP synthase and acetyl transacylase activities. Its substrate specificity determines the biosynthesis of branched-chain and/or straight-chain of fatty acids. The polypeptide is Beta-ketoacyl-[acyl-carrier-protein] synthase III (Delftia acidovorans (strain DSM 14801 / SPH-1)).